Consider the following 256-residue polypeptide: Calsenilin (256 aa).

Residues methionine 1–isoleucine 22 are disordered. Lysine 26 is covalently cross-linked (Glycyl lysine isopeptide (Lys-Gly) (interchain with G-Cter in SUMO1)). Residues cysteine 45 and cysteine 46 are each lipidated (S-palmitoyl cysteine). Serine 60 and serine 63 each carry phosphoserine. The EF-hand 1; degenerate domain occupies leucine 67–proline 123. A Glycyl lysine isopeptide (Lys-Gly) (interchain with G-Cter in SUMO1) cross-link involves residue lysine 90. EF-hand domains are found at residues aspartate 126–glycine 161, threonine 162–methionine 197, and alanine 210–isoleucine 245. 9 residues coordinate Ca(2+): aspartate 175, asparagine 177, aspartate 179, cysteine 181, glutamate 186, aspartate 223, asparagine 225, aspartate 227, and glutamate 234. The interval glutamate 243–isoleucine 256 is interaction with KCND2.

It belongs to the recoverin family. Binds to DNA as a homomultimer. Dimerization is induced by binding to calcium. Interacts with the C-terminus of PSEN1 and PSEN2 and with PSEN2 CTF subunit. Associates with KCN1. Component of heteromultimeric potassium channels. Identified in potassium channel complexes containing KCND1, KCND2, KCND3, KCNIP1, KCNIP2, KCNIP3, KCNIP4, DPP6 and DPP10. Interacts with KCND2 and KCND3. Post-translationally, palmitoylated. Palmitoylation enhances association with the plasma membrane. Proteolytically cleaved by caspase-3. Highly expressed in brain. Isoform 1 or isoform 4 (T+ forms) are expressed at equal levels with isoform 2 or isoform 3 (T- forms). Primarily detected in the layer V and deep layer VI of the cerebral cortex, the hippocampus, and the entire cerebellum. Expressed at low levels in testis. Also expressed in heart.

The protein resides in the cytoplasm. It localises to the cell membrane. Its subcellular location is the endoplasmic reticulum. It is found in the golgi apparatus. The protein localises to the nucleus. In terms of biological role, calcium-dependent transcriptional repressor that binds to the DRE element of genes including PDYN and FOS. Affinity for DNA is reduced upon binding to calcium and enhanced by binding to magnesium. Seems to be involved in nociception. Functionally, regulatory subunit of Kv4/D (Shal)-type voltage-gated rapidly inactivating A-type potassium channels, such as KCND2/Kv4.2 and KCND3/Kv4.3. Modulates channel expression at the cell membrane, gating characteristics, inactivation kinetics and rate of recovery from inactivation in a calcium-dependent and isoform-specific manner. Its function is as follows. May play a role in the regulation of PSEN2 proteolytic processing and apoptosis. Together with PSEN2 involved in modulation of amyloid-beta formation. The chain is Calsenilin (Kcnip3) from Mus musculus (Mouse).